The following is a 475-amino-acid chain: Glycogen synthase (475 aa).

Lysine 15 contributes to the ADP-alpha-D-glucose binding site.

The protein belongs to the glycosyltransferase 1 family. Bacterial/plant glycogen synthase subfamily.

The catalysed reaction is [(1-&gt;4)-alpha-D-glucosyl](n) + ADP-alpha-D-glucose = [(1-&gt;4)-alpha-D-glucosyl](n+1) + ADP + H(+). It participates in glycan biosynthesis; glycogen biosynthesis. Functionally, synthesizes alpha-1,4-glucan chains using ADP-glucose. The protein is Glycogen synthase of Chlamydia felis (strain Fe/C-56) (Chlamydophila felis).